The chain runs to 972 residues: Isoleucine--tRNA ligase (972 aa).

The short motif at Pro63–His73 is the 'HIGH' region element. Glu603 serves as a coordination point for L-isoleucyl-5'-AMP. The short motif at Lys644–Ser648 is the 'KMSKS' region element. Residue Lys647 participates in ATP binding.

It belongs to the class-I aminoacyl-tRNA synthetase family. IleS type 1 subfamily. As to quaternary structure, monomer.

The protein localises to the cytoplasm. It catalyses the reaction tRNA(Ile) + L-isoleucine + ATP = L-isoleucyl-tRNA(Ile) + AMP + diphosphate. Functionally, catalyzes the attachment of isoleucine to tRNA(Ile). As IleRS can inadvertently accommodate and process structurally similar amino acids such as valine, to avoid such errors it has two additional distinct tRNA(Ile)-dependent editing activities. One activity is designated as 'pretransfer' editing and involves the hydrolysis of activated Val-AMP. The other activity is designated 'posttransfer' editing and involves deacylation of mischarged Val-tRNA(Ile). The sequence is that of Isoleucine--tRNA ligase from Brucella suis biovar 1 (strain 1330).